We begin with the raw amino-acid sequence, 210 residues long: Probable nicotinate-nucleotide adenylyltransferase (210 aa).

This sequence belongs to the NadD family.

It carries out the reaction nicotinate beta-D-ribonucleotide + ATP + H(+) = deamido-NAD(+) + diphosphate. It functions in the pathway cofactor biosynthesis; NAD(+) biosynthesis; deamido-NAD(+) from nicotinate D-ribonucleotide: step 1/1. In terms of biological role, catalyzes the reversible adenylation of nicotinate mononucleotide (NaMN) to nicotinic acid adenine dinucleotide (NaAD). The protein is Probable nicotinate-nucleotide adenylyltransferase of Streptococcus pyogenes serotype M6 (strain ATCC BAA-946 / MGAS10394).